The following is a 361-amino-acid chain: 4-hydroxytryptamine kinase (361 aa).

Residues Asn37, Lys57, and 118-120 (QDV) each bind ATP. Asp224 is an active-site residue. Position 248–250 (248–250 (DWE)) interacts with ATP.

This sequence belongs to the methylthioribose kinase family. As to quaternary structure, monomer. Mg(2+) is required as a cofactor.

The catalysed reaction is 4-hydroxytryptamine + ATP = norbaeocystin + ADP + H(+). It catalyses the reaction psilocin + ATP = psilocybin + ADP + H(+). The enzyme catalyses 4-hydroxy-N,N,N-trimethyltryptamine + ATP = aeruginascin + ADP + H(+). It functions in the pathway secondary metabolite biosynthesis. Functionally, 4-hydroxytryptamine kinase; part of the gene cluster that mediates the biosynthesis of psilocybin, a psychotropic tryptamine-derived natural product. The first step in the pathway is the decarboxylation of L-tryptophan to tryptamine by the decarboxylase psiD. PsiD does not decarboxylate phenylalanine, tyrosine, or 5-hydroxy- L -tryptophan (5-HTP). 4-hydroxy-L-tryptophan is accepted as substrate by psiD as well. The cytochrome P450 monooxygenase psiH then converts tryptamine to 4-hydroxytryptamine. The kinase psiK catalyzes the 4-O-phosphorylation step by converting 4-hydroxytryptamine into norbaeocystin. The methyltransferase psiM then catalyzes iterative methyl transfer to the amino group of norbaeocystin to yield psilocybin via a monomethylated intermediate, baeocystin. 4-hydroxy-6-methyl-l-tryptophancan also be converted the decarboxylase PsiD, kinase PsiK, and methyltransferase PsiM into respectively 6-methyl-norbaeocystin, 6-methylbaeocystin, and 6-methylpsilocybin. PsiK kinase can also turn psilocin into psilocybin. This activity may represent a protective mechanism to rephosphorylate the unstable psilocin to the stable psilocybin in case of intracellular ester cleavage. Moreover, psiK is able to O-phosphorylate the quaternary amine 4-hydroxy-N,N,N-trimethyltryptamine (4-OH-TMT) to yield aeruginascin, another bioactive compound found in Psilocybe species. This chain is 4-hydroxytryptamine kinase, found in Psilocybe cyanescens.